We begin with the raw amino-acid sequence, 970 residues long: GEM-interacting protein (970 aa).

At Ser19 the chain carries Phosphoserine. 3 disordered regions span residues 44 to 76 (PLLS…EGPV), 224 to 263 (SEDL…AQAK), and 377 to 478 (PLDI…ENGL). Residues 56–65 (PTATVTNEAS) are compositionally biased toward polar residues. Phosphoserine occurs at positions 71, 231, 234, 243, 437, and 441. The F-BAR domain maps to 81–344 (EELDLRLIRT…CCAPFEPGQR (264 aa)). The span at 231–246 (SQGSPEDSAPQASPGP) shows a compositional bias: polar residues. The segment covering 459–472 (SSDDFEERDPDLGD) has biased composition (acidic residues). The Phorbol-ester/DAG-type zinc-finger motif lies at 493-537 (THQLRRLRGPAKCRECEAFMVSGTECEECFLTCHKRCLETLLILC). Residues 554–757 (LQLPRDFPEE…FLIVHYEQIF (204 aa)) enclose the Rho-GAP domain. A Phosphothreonine modification is found at Thr660. The interval 762 to 878 (LPQATEPPPQ…PVKYPRGGVR (117 aa)) is disordered. Residues 766 to 778 (TEPPPQDSSPAPG) are compositionally biased toward pro residues. A compositionally biased stretch (polar residues) spans 815–830 (EQHPTATPTEIPTPQS). The span at 831–844 (DQREDVAEDTKDGG) shows a compositional bias: basic and acidic residues. Polar residues predominate over residues 847-863 (VSSQGPEDSLLGTQSRG). Phosphoserine occurs at positions 885, 907, 914, 919, and 923. The tract at residues 897–932 (ETPITSVPRGSLRGRGPSPAAASPEGSPLRRTPLPK) is disordered. A compositionally biased stretch (low complexity) spans 910–923 (GRGPSPAAASPEGS).

In terms of assembly, interacts with GEM through its N-terminal.

In terms of biological role, stimulates, in vitro and in vivo, the GTPase activity of RhoA. The chain is GEM-interacting protein (GMIP) from Homo sapiens (Human).